Reading from the N-terminus, the 322-residue chain is Large ribosomal subunit protein uL29m (322 aa).

The tract at residues 1 to 44 (MLNVQRGLHTTVRLSARTKYTKPKPKPQARVIKSEPSQVTHHDN) is disordered.

This sequence belongs to the universal ribosomal protein uL29 family. As to quaternary structure, component of the mitochondrial large ribosomal subunit. Mature mitochondrial ribosomes consist of a small (37S) and a large (54S) subunit. The 37S subunit contains at least 33 different proteins and 1 molecule of RNA (15S). The 54S subunit contains at least 45 different proteins and 1 molecule of RNA (21S).

The protein localises to the mitochondrion. The chain is Large ribosomal subunit protein uL29m (MRPL4) from Vanderwaltozyma polyspora (strain ATCC 22028 / DSM 70294 / BCRC 21397 / CBS 2163 / NBRC 10782 / NRRL Y-8283 / UCD 57-17) (Kluyveromyces polysporus).